Reading from the N-terminus, the 493-residue chain is 3-octaprenyl-4-hydroxybenzoate carboxy-lyase (493 aa).

Residue N172 coordinates Mn(2+). Prenylated FMN contacts are provided by residues 175–177, 189–191, and 194–195; these read IYR, RWL, and RG. E238 contributes to the Mn(2+) binding site. D287 acts as the Proton donor in catalysis.

Belongs to the UbiD family. In terms of assembly, homohexamer. Requires prenylated FMN as cofactor. It depends on Mn(2+) as a cofactor.

Its subcellular location is the cell membrane. It carries out the reaction a 4-hydroxy-3-(all-trans-polyprenyl)benzoate + H(+) = a 2-(all-trans-polyprenyl)phenol + CO2. It participates in cofactor biosynthesis; ubiquinone biosynthesis. Functionally, catalyzes the decarboxylation of 3-octaprenyl-4-hydroxy benzoate to 2-octaprenylphenol, an intermediate step in ubiquinone biosynthesis. This is 3-octaprenyl-4-hydroxybenzoate carboxy-lyase from Shewanella woodyi (strain ATCC 51908 / MS32).